A 436-amino-acid polypeptide reads, in one-letter code: MDKFVIRGGNPLIGTVRVSGAKNSALPCMAAAILTEDEVILENIPQVRDIETERKLLTSMGAEVELGYGRAQHRTTISCRVLSDPTAKYEIVKTMRASALVLGPLVARTGLARVSMPGGCAIGARPIDLHIKGLEQMGATIVYEHGYIEARAERLKGAQIHFDKITVTGTEDLMMAAVLAEGETVLENAAREPEVTDLAALLTAMGAQIEGAGTSEIRIQGVEKLHGARHRINPDRIEAGTFLIAGAITGGDLCVSHCNPAHLGAVIAKLEEAGVRIDVLGKDSLRVRSEGHLKPIDVSTEEYPGFPTDMQAQYMALATQAEGTTLVKENIFENRFMHVQELVRMGANIKTAGRIASVRGKTPLSAAAVMCSDLRASASLVLAALVANGESILDRVYNIDRGYEHIEEKLRGVGAQIKRLGNVFNDKREAAQISAS.

22–23 (KN) provides a ligand contact to phosphoenolpyruvate. Arginine 96 contributes to the UDP-N-acetyl-alpha-D-glucosamine binding site. Cysteine 120 acts as the Proton donor in catalysis. At cysteine 120 the chain carries 2-(S-cysteinyl)pyruvic acid O-phosphothioketal. UDP-N-acetyl-alpha-D-glucosamine is bound by residues 125-129 (RPIDL), aspartate 309, and isoleucine 331.

The protein belongs to the EPSP synthase family. MurA subfamily.

The protein localises to the cytoplasm. It carries out the reaction phosphoenolpyruvate + UDP-N-acetyl-alpha-D-glucosamine = UDP-N-acetyl-3-O-(1-carboxyvinyl)-alpha-D-glucosamine + phosphate. It participates in cell wall biogenesis; peptidoglycan biosynthesis. Functionally, cell wall formation. Adds enolpyruvyl to UDP-N-acetylglucosamine. In Acidobacterium capsulatum (strain ATCC 51196 / DSM 11244 / BCRC 80197 / JCM 7670 / NBRC 15755 / NCIMB 13165 / 161), this protein is UDP-N-acetylglucosamine 1-carboxyvinyltransferase.